A 622-amino-acid chain; its full sequence is Probable potassium transport system protein Kup (622 aa).

12 helical membrane-spanning segments follow: residues 9-29, 52-72, 101-121, 137-157, 169-189, 213-233, 247-267, 287-309, 337-357, 363-383, 396-416, and 419-439; these read LPAV…TSPL, FLSL…LAFV, VLLV…VITP, PALT…LFVI, FGPV…ISIF, VAFF…ALYA, WFTV…ALIL, FPMV…SGVF, IYIP…VVTF, LAAA…ILAC, VVKI…LANV, and FFAG…VMAT.

It belongs to the HAK/KUP transporter (TC 2.A.72) family.

It is found in the cell inner membrane. The catalysed reaction is K(+)(in) + H(+)(in) = K(+)(out) + H(+)(out). Its function is as follows. Transport of potassium into the cell. Likely operates as a K(+):H(+) symporter. This Tolumonas auensis (strain DSM 9187 / NBRC 110442 / TA 4) protein is Probable potassium transport system protein Kup.